The chain runs to 425 residues: UPF0761 membrane protein xcc-b100_3490 (425 aa).

A run of 6 helical transmembrane segments spans residues 48–68 (VFALVPLAIVVFGVLSAFPAF), 105–125 (FTVAGMVALVASLLITLHSIE), 154–174 (GTMLAAASMAMAAYVFALPLF), 182–202 (LAEFAWRLAPMAVEFVCIVLI), 216–236 (ALPGALLAVILMEIVKWGFGF), and 250–270 (ALSALPILLLWIYLSWVSVLL).

Belongs to the UPF0761 family.

The protein localises to the cell inner membrane. This is UPF0761 membrane protein xcc-b100_3490 from Xanthomonas campestris pv. campestris (strain B100).